The following is a 1801-amino-acid chain: MASSLAAQLSQIAANSTNQLNLKAQRLAHSKSLIFDKRVAGSQDFDTIYDICYDGFRELCQLDFRFAQFERSIFSEQSKVQDRTEMNVEQNRELDSVLEAFLALVGGRLLLSPAVKAVEWLIRRFRVHEYNTRFTILTFLPYYSTPVFLNLLAILPDDLPSALKVLIPYKRSAINPVRQALVQNAISNRDLITTLNNYVLQVCRQRAHHHALLAFWAGIITEGVAGMLDSSRSGRRNVEKQKHDDIILQILPVLNDGFAMKDVSELVIGCYMVCVVLAQKAELQDRVLDGLMEAVTGSWTEETMSSGLICVAVLAQQKPDPILPKRVFKAMLRMKDPLKQLADISTEYKTSQLLLGLVAGCVDSLSTQKDSARLELLSSMFKSQLLNDADTAKAMTFVLQAASAVGGTISLDTQTQIAEIVQHFSRSSSLQPVFQKVIDESSIDLSVIEYNLQTVIESVPVNKAIEDVEMEDADKTETATDGYDSALESLAKESSFSTSFLTAQSIPVFDKLVQTFALSAGSPERVSAFVELPVLCKANATTSPQFLSFFVRVFTGMYPAGVKAAALKTISSIVSSAAWSDVDVQALLPFMLIALADPSERVRSGAVDALANIGKVVDKKKKSGVWARDSLYGKSMHIPWLSSSDFQKILERAVLPELEECRSDGEHIGRALENALRGAASDSASAIKKPLRLAFFTYLCSHAVHLPLFAPRAGLLNLLNRVDKAGGTTRTKELEPLLKKWRDMSEQEVAEVHEKEQISVSDFEAQVLKTVTPKEKDSINLLLSTVTPYSPSLRASFVSSVFNRISEIWGKVPEDRQITAAEKLFELSTQASESPLVDNARDLLRRVELPGPVLLNYLQQIPASITDIDSLGPAPKRRRTSQNNMVAMTTKDEAKLSKLMDKMTFILELVDGSSPEAHPELTEWLFQTLAALHHFKSQIQSGMSYLLSLTLGSLLAIVNRSRASSKPQFDTSVVRADLVVDCVRTTESPQVQNTALLLVAGLSVIAPELVLHSVMPIFTFMGSSVLRKDDDYSVSVIDQTIDQVVPALIQSLRHQKRDVVSGTSELLLSFTAAFEHIPSHRRLRLFHALITKLGTEEFLFAVLAMLANRYSMDKAVLVLMTGLVSDADATVELSTYSKFLNLVGDSLKSKPGISQVLLGIGSDDGREPHKVAADLLRALAYLFKHSSLKVKIARALTTETDDSERIRALFSNILEQVLAIGESMQSVKPVHQAAGDVLSGLFSTLTTIDFLDTIEALLKRPDDALRRKVLSLLATRLQQSPERDGASQTRMLDFLTVLVDIVQSSPDILLKHAAVTCIDRITEKYGKKEPSMVTSAAQVVASASCIGQEDDRIRINGVLCLASMVEVLGQAMIPALPEVLNRSLALLELSLETNKVNARLHDAVFTLFSALFVHLPYMVSASHLDRLLVLSFKSAASDEDLDNENRQEALHFMARKVDMAVALASIERNWTQAVSAGPSATHEVLDAISLSIEKHPKSATMKNLSVLTTILFRAFDLRREQTQSSESAFDASDLEEIEDLINDVTIKMIYKLNDTAFRPIFIKLVEWATGLPEKNTQGGLARLTTFYRFLQVFFGTLQSIVTGYASYIIESVVSVLETASPSNPNTKSLWLATMRMLRSAFEHDQDEFWQSPSHITKISTPLISHLRHATSTTTGALVATETIPTITELAVAADSTDNHKELNTVLMRFLRPSSASLSSSSTKRAGPGLGGDNPQTRIAALKTEQALTEHLGEDWLALLPEMLPYISELMEDEDEGVEREVRKWVKQIEGVLGERLDDMLT.

2 helical membrane-spanning segments follow: residues 102 to 122 (LALVGGRLLLSPAVKAVEWLI) and 136 to 156 (ILTFLPYYSTPVFLNLLAILP). An HEAT 1 repeat occupies 581–619 (DVDVQALLPFMLIALADPSERVRSGAVDALANIGKVVDK). 2 consecutive transmembrane segments (helical) span residues 939-959 (IQSGMSYLLSLTLGSLLAIVN) and 995-1015 (ALLLVAGLSVIAPELVLHSVM). 5 HEAT repeats span residues 1038-1076 (DQTIDQVVPALIQSLRHQKRDVVSGTSELLLSFTAAFEH), 1110-1148 (YSMDKAVLVLMTGLVSDADATVELSTYSKFLNLVGDSLK), 1244-1282 (TLTTIDFLDTIEALLKRPDDALRRKVLSLLATRLQQSPE), 1288-1327 (QTRMLDFLTVLVDIVQSSPDILLKHAAVTCIDRITEKYGK), and 1756-1794 (LALLPEMLPYISELMEDEDEGVEREVRKWVKQIEGVLGE).

Belongs to the HEATR1/UTP10 family. As to quaternary structure, component of the ribosomal small subunit (SSU) processome.

It localises to the nucleus. Its subcellular location is the nucleolus. The protein localises to the membrane. Involved in nucleolar processing of pre-18S ribosomal RNA. Involved in ribosome biosynthesis. The sequence is that of U3 small nucleolar RNA-associated protein 10 from Emericella nidulans (strain FGSC A4 / ATCC 38163 / CBS 112.46 / NRRL 194 / M139) (Aspergillus nidulans).